A 287-amino-acid polypeptide reads, in one-letter code: Nucleotide-binding protein VIBHAR_03667 (287 aa).

Residue 8 to 15 (GHSGAGKS) participates in ATP binding. A GTP-binding site is contributed by 56–59 (DIRN).

This sequence belongs to the RapZ-like family.

Its function is as follows. Displays ATPase and GTPase activities. This Vibrio campbellii (strain ATCC BAA-1116) protein is Nucleotide-binding protein VIBHAR_03667.